Here is a 335-residue protein sequence, read N- to C-terminus: Methionine import ATP-binding protein MetN 2 (335 aa).

One can recognise an ABC transporter domain in the interval 2-242 (IEFQNVHKTY…PEHPTTKRFV (241 aa)). 38 to 45 (GHSGAGKS) provides a ligand contact to ATP.

This sequence belongs to the ABC transporter superfamily. Methionine importer (TC 3.A.1.24) family. As to quaternary structure, the complex is composed of two ATP-binding proteins (MetN), two transmembrane proteins (MetI) and a solute-binding protein (MetQ).

Its subcellular location is the cell inner membrane. It catalyses the reaction L-methionine(out) + ATP + H2O = L-methionine(in) + ADP + phosphate + H(+). It carries out the reaction D-methionine(out) + ATP + H2O = D-methionine(in) + ADP + phosphate + H(+). Its function is as follows. Part of the ABC transporter complex MetNIQ involved in methionine import. Responsible for energy coupling to the transport system. In Pseudomonas entomophila (strain L48), this protein is Methionine import ATP-binding protein MetN 2.